The following is a 581-amino-acid chain: A-type ATP synthase subunit A (581 aa).

Gly-234–Thr-241 serves as a coordination point for ATP.

Belongs to the ATPase alpha/beta chains family. As to quaternary structure, has multiple subunits with at least A(3), B(3), C, D, E, F, H, I and proteolipid K(x).

It localises to the cell membrane. It carries out the reaction ATP + H2O + 4 H(+)(in) = ADP + phosphate + 5 H(+)(out). Its function is as follows. Component of the A-type ATP synthase that produces ATP from ADP in the presence of a proton gradient across the membrane. The A chain is the catalytic subunit. The chain is A-type ATP synthase subunit A from Archaeoglobus fulgidus (strain ATCC 49558 / DSM 4304 / JCM 9628 / NBRC 100126 / VC-16).